Reading from the N-terminus, the 67-residue chain is DNA-directed RNA polymerase subunit omega (67 aa).

The protein belongs to the RNA polymerase subunit omega family. In terms of assembly, the RNAP catalytic core consists of 2 alpha, 1 beta, 1 beta' and 1 omega subunit. When a sigma factor is associated with the core the holoenzyme is formed, which can initiate transcription.

It catalyses the reaction RNA(n) + a ribonucleoside 5'-triphosphate = RNA(n+1) + diphosphate. In terms of biological role, promotes RNA polymerase assembly. Latches the N- and C-terminal regions of the beta' subunit thereby facilitating its interaction with the beta and alpha subunits. The protein is DNA-directed RNA polymerase subunit omega of Polaromonas naphthalenivorans (strain CJ2).